Reading from the N-terminus, the 286-residue chain is UPF0761 membrane protein KPK_5501 (286 aa).

7 consecutive transmembrane segments (helical) span residues 44-64, 74-94, 104-124, 140-160, 183-203, 210-230, and 244-264; these read LLSLVPLIAVVFALFAAFPMF, FIFANFIPATGDVIQGYIEQF, VGAFGLIVTSLLLMYSIDSAL, FAVYWMILTLGPLLAGASLAI, LFPLILSWAAFWLLYSIVPTT, AVIGALVAALLFEAGKKAFAL, and VISVVPILFVWVYWTWCIVLL.

Belongs to the UPF0761 family.

Its subcellular location is the cell inner membrane. In Klebsiella pneumoniae (strain 342), this protein is UPF0761 membrane protein KPK_5501.